The chain runs to 508 residues: Steroid 17-alpha-hydroxylase/17,20 lyase (508 aa).

Asn-202 lines the substrate pocket. Cys-442 is a heme binding site.

This sequence belongs to the cytochrome P450 family. The cofactor is heme.

The protein localises to the endoplasmic reticulum membrane. It is found in the microsome membrane. It carries out the reaction a C21-steroid + reduced [NADPH--hemoprotein reductase] + O2 = a 17alpha-hydroxy-C21-steroid + oxidized [NADPH--hemoprotein reductase] + H2O + H(+). It catalyses the reaction progesterone + reduced [NADPH--hemoprotein reductase] + O2 = 17alpha-hydroxyprogesterone + oxidized [NADPH--hemoprotein reductase] + H2O + H(+). The catalysed reaction is pregnenolone + reduced [NADPH--hemoprotein reductase] + O2 = 17alpha-hydroxypregnenolone + oxidized [NADPH--hemoprotein reductase] + H2O + H(+). The enzyme catalyses 17alpha-hydroxyprogesterone + reduced [NADPH--hemoprotein reductase] + O2 = androst-4-ene-3,17-dione + acetate + oxidized [NADPH--hemoprotein reductase] + H2O + 2 H(+). It carries out the reaction 17alpha-hydroxyprogesterone + reduced [NADPH--hemoprotein reductase] + O2 = 16alpha,17alpha-dihydroxyprogesterone + oxidized [NADPH--hemoprotein reductase] + H2O + H(+). It catalyses the reaction 16alpha,17alpha-dihydroxyprogesterone + reduced [NADPH--hemoprotein reductase] + O2 = 6beta,16alpha,17alpha-trihydroxyprogesterone + oxidized [NADPH--hemoprotein reductase] + H2O + H(+). The catalysed reaction is 17alpha-hydroxypregnenolone + reduced [NADPH--hemoprotein reductase] + O2 = 3beta-hydroxyandrost-5-en-17-one + acetate + oxidized [NADPH--hemoprotein reductase] + H2O + 2 H(+). The enzyme catalyses 16alpha,17alpha-dihydroxypregnenolone + reduced [NADPH--hemoprotein reductase] + O2 = 3beta,16alpha-dihydroxy-androst-5-en-17-one + acetate + oxidized [NADPH--hemoprotein reductase] + H2O + 2 H(+). It carries out the reaction 3beta-hydroxyandrost-5-en-17-one + reduced [NADPH--hemoprotein reductase] + O2 = 3beta,16alpha-dihydroxy-androst-5-en-17-one + oxidized [NADPH--hemoprotein reductase] + H2O + H(+). It catalyses the reaction androst-4-ene-3,17-dione + reduced [NADPH--hemoprotein reductase] + O2 = 16alpha-hydroxyandrost-4-ene-3,17-dione + oxidized [NADPH--hemoprotein reductase] + H2O + H(+). Its pathway is steroid hormone biosynthesis. It participates in steroid biosynthesis; glucocorticoid biosynthesis. With respect to regulation, regulated predominantly by intracellular cAMP levels. The 17,20-lyase activity is stimulated by cytochrome b5, which acts as an allosteric effector increasing the Vmax of the lyase activity. In terms of biological role, a cytochrome P450 monooxygenase involved in corticoid and androgen biosynthesis. Catalyzes 17-alpha hydroxylation of C21 steroids, which is common for both pathways. A second oxidative step, required only for androgen synthesis, involves an acyl-carbon cleavage. The 17-alpha hydroxy intermediates, as part of adrenal glucocorticoids biosynthesis pathway, are precursors of cortisol. Hydroxylates steroid hormones, pregnenolone and progesterone to form 17-alpha hydroxy metabolites, followed by the cleavage of the C17-C20 bond to form C19 steroids, dehydroepiandrosterone (DHEA) and androstenedione. Has 16-alpha hydroxylase activity. Catalyzes 16-alpha hydroxylation of 17-alpha hydroxy pregnenolone, followed by the cleavage of the C17-C20 bond to form 16-alpha-hydroxy DHEA. Also 16-alpha hydroxylates androgens, relevant for estriol synthesis. Mechanistically, uses molecular oxygen inserting one oxygen atom into a substrate, and reducing the second into a water molecule, with two electrons provided by NADPH via cytochrome P450 reductase (CPR; NADPH-ferrihemoprotein reductase). This chain is Steroid 17-alpha-hydroxylase/17,20 lyase (CYP17A1), found in Felis catus (Cat).